The chain runs to 165 residues: ATP synthase subunit b (165 aa).

The chain crosses the membrane as a helical span at residues 7–27 (STTIGDIIIVSGSVLLLFILI).

It belongs to the ATPase B chain family. In terms of assembly, F-type ATPases have 2 components, F(1) - the catalytic core - and F(0) - the membrane proton channel. F(1) has five subunits: alpha(3), beta(3), gamma(1), delta(1), epsilon(1). F(0) has three main subunits: a(1), b(2) and c(10-14). The alpha and beta chains form an alternating ring which encloses part of the gamma chain. F(1) is attached to F(0) by a central stalk formed by the gamma and epsilon chains, while a peripheral stalk is formed by the delta and b chains.

The protein resides in the cell membrane. Functionally, f(1)F(0) ATP synthase produces ATP from ADP in the presence of a proton or sodium gradient. F-type ATPases consist of two structural domains, F(1) containing the extramembraneous catalytic core and F(0) containing the membrane proton channel, linked together by a central stalk and a peripheral stalk. During catalysis, ATP synthesis in the catalytic domain of F(1) is coupled via a rotary mechanism of the central stalk subunits to proton translocation. Its function is as follows. Component of the F(0) channel, it forms part of the peripheral stalk, linking F(1) to F(0). This Streptococcus agalactiae serotype Ia (strain ATCC 27591 / A909 / CDC SS700) protein is ATP synthase subunit b.